Consider the following 122-residue polypeptide: uncharacterized protein (122 aa).

Residues 1–10 show a composition bias toward polar residues; sequence MGTGLRSQSL. Positions 1–68 are disordered; the sequence is MGTGLRSQSL…GQEWLPGSLG (68 aa). The segment covering 40-56 has biased composition (basic and acidic residues); the sequence is QGREKSRSSDGGPERLD.

This is an uncharacterized protein from Bos taurus (Bovine).